Reading from the N-terminus, the 315-residue chain is Glycine--tRNA ligase alpha subunit (315 aa).

Belongs to the class-II aminoacyl-tRNA synthetase family. Tetramer of two alpha and two beta subunits.

Its subcellular location is the cytoplasm. It catalyses the reaction tRNA(Gly) + glycine + ATP = glycyl-tRNA(Gly) + AMP + diphosphate. The chain is Glycine--tRNA ligase alpha subunit from Pseudomonas putida (strain GB-1).